Here is a 385-residue protein sequence, read N- to C-terminus: NifS/IcsS protein homolog (385 aa).

Pyridoxal 5'-phosphate-binding positions include 69–70 (GT), N149, Q178, and 199–201 (SSH). K202 is modified (N6-(pyridoxal phosphate)lysine). Residue T237 coordinates pyridoxal 5'-phosphate. The active-site Cysteine persulfide intermediate is the C325. C325 serves as a coordination point for [2Fe-2S] cluster.

The protein belongs to the class-V pyridoxal-phosphate-dependent aminotransferase family. NifS/IscS subfamily. It depends on pyridoxal 5'-phosphate as a cofactor.

The chain is NifS/IcsS protein homolog from Lactobacillus delbrueckii subsp. bulgaricus (strain ATCC 11842 / DSM 20081 / BCRC 10696 / JCM 1002 / NBRC 13953 / NCIMB 11778 / NCTC 12712 / WDCM 00102 / Lb 14).